Consider the following 198-residue polypeptide: Large ribosomal subunit protein bL9 (198 aa).

Over residues 156-166 (RGEDISTRQED) the composition is skewed to basic and acidic residues. Positions 156 to 198 (RGEDISTRQEDQDAAAEALAAAGEFFDPEAHNDGEQEEEAGDK) are disordered.

Belongs to the bacterial ribosomal protein bL9 family.

In terms of biological role, binds to the 23S rRNA. The chain is Large ribosomal subunit protein bL9 from Rhodopseudomonas palustris (strain BisB18).